The chain runs to 80 residues: Transcription elongation factor 1 homolog (80 aa).

Residues cysteine 25, cysteine 28, cysteine 49, and cysteine 52 each contribute to the Zn(2+) site.

The protein belongs to the ELOF1 family.

It is found in the nucleus. In terms of biological role, transcription elongation factor implicated in the maintenance of proper chromatin structure in actively transcribed regions. This is Transcription elongation factor 1 homolog from Encephalitozoon cuniculi (strain GB-M1) (Microsporidian parasite).